The sequence spans 538 residues: uncharacterized protein (538 aa).

4 disordered regions span residues 20–71 (RLSA…GGAQ), 151–211 (LWAE…EHPK), 288–331 (MLQP…QQHK), and 458–482 (EFEK…LKNY). Residues 154–171 (ESEKSESKGTRRDFRSYD) are compositionally biased toward basic and acidic residues.

This is an uncharacterized protein from Homo sapiens (Human).